Here is a 750-residue protein sequence, read N- to C-terminus: Ribosomal RNA large subunit methyltransferase K/L (750 aa).

The THUMP domain maps to 46-157 (TAYRLCLWSR…RGEAILSLDL (112 aa)).

This sequence belongs to the methyltransferase superfamily. RlmKL family.

The protein localises to the cytoplasm. It carries out the reaction guanosine(2445) in 23S rRNA + S-adenosyl-L-methionine = N(2)-methylguanosine(2445) in 23S rRNA + S-adenosyl-L-homocysteine + H(+). The enzyme catalyses guanosine(2069) in 23S rRNA + S-adenosyl-L-methionine = N(2)-methylguanosine(2069) in 23S rRNA + S-adenosyl-L-homocysteine + H(+). Specifically methylates the guanine in position 2445 (m2G2445) and the guanine in position 2069 (m7G2069) of 23S rRNA. The chain is Ribosomal RNA large subunit methyltransferase K/L from Pseudomonas syringae pv. tomato (strain ATCC BAA-871 / DC3000).